A 549-amino-acid polypeptide reads, in one-letter code: Urocanate hydratase (549 aa).

NAD(+) is bound by residues 46-47 (GG), glutamine 124, 170-172 (GMG), glutamate 190, arginine 195, 236-237 (NA), 257-261 (QTSAH), 267-268 (YV), and tyrosine 316. The active site involves cysteine 404. Glycine 486 lines the NAD(+) pocket.

This sequence belongs to the urocanase family. Requires NAD(+) as cofactor.

Its subcellular location is the cytoplasm. It carries out the reaction 4-imidazolone-5-propanoate = trans-urocanate + H2O. Its pathway is amino-acid degradation; L-histidine degradation into L-glutamate; N-formimidoyl-L-glutamate from L-histidine: step 2/3. Functionally, catalyzes the conversion of urocanate to 4-imidazolone-5-propionate. In Natranaerobius thermophilus (strain ATCC BAA-1301 / DSM 18059 / JW/NM-WN-LF), this protein is Urocanate hydratase.